A 155-amino-acid chain; its full sequence is 3-hydroxyacyl-[acyl-carrier-protein] dehydratase FabZ (155 aa).

Histidine 61 is an active-site residue.

Belongs to the thioester dehydratase family. FabZ subfamily.

The protein localises to the cytoplasm. The enzyme catalyses a (3R)-hydroxyacyl-[ACP] = a (2E)-enoyl-[ACP] + H2O. In terms of biological role, involved in unsaturated fatty acids biosynthesis. Catalyzes the dehydration of short chain beta-hydroxyacyl-ACPs and long chain saturated and unsaturated beta-hydroxyacyl-ACPs. This Synechococcus sp. (strain ATCC 27144 / PCC 6301 / SAUG 1402/1) (Anacystis nidulans) protein is 3-hydroxyacyl-[acyl-carrier-protein] dehydratase FabZ.